The sequence spans 463 residues: L-seryl-tRNA(Sec) selenium transferase (463 aa).

Lys295 is subject to N6-(pyridoxal phosphate)lysine.

This sequence belongs to the SelA family. As to quaternary structure, homodecamer; pentamer of dimers. Binds only one seryl-tRNA(Sec) per dimer. The cofactor is pyridoxal 5'-phosphate.

The protein resides in the cytoplasm. It catalyses the reaction L-seryl-tRNA(Sec) + selenophosphate + H(+) = L-selenocysteinyl-tRNA(Sec) + phosphate. It participates in aminoacyl-tRNA biosynthesis; selenocysteinyl-tRNA(Sec) biosynthesis; selenocysteinyl-tRNA(Sec) from L-seryl-tRNA(Sec) (bacterial route): step 1/1. In terms of biological role, converts seryl-tRNA(Sec) to selenocysteinyl-tRNA(Sec) required for selenoprotein biosynthesis. The chain is L-seryl-tRNA(Sec) selenium transferase from Shigella boydii serotype 18 (strain CDC 3083-94 / BS512).